The chain runs to 331 residues: MQFIDQARIAVKAGRGGDGICAFRREKYVPAGGPSGGDGGRGGDVVLQADSNLQTLLDFKYKRLFQADDGRRGGPNRSTGASANTLLIRVPCGTEVRDLGTDLLLGDLTDNGEQLMIATGGKGGLGNAHYLSNRNRAPEKFTEGKDGEERELQLELKLLAEVGLVGLPNAGKSTLISVLSAARPKIADYPFTTLVPNLGVVRRPSGDGTVFADIPGLIAGAAQGAGLGHDFLRHIERTRVLIHLVDGSSPDPIADAQVLLGELEAYGNGLLERPRLLVLSKSELLDEEQLEALPAQLSDTLGQPVQVISAVTGQGLDGLLQQVWQELGVSS.

In terms of domain architecture, Obg spans 1-159 (MQFIDQARIA…RELQLELKLL (159 aa)). The 169-residue stretch at 160–328 (AEVGLVGLPN…LLQQVWQELG (169 aa)) folds into the OBG-type G domain. GTP-binding positions include 166 to 173 (GLPNAGKS), 191 to 195 (FTTLV), 213 to 216 (DIPG), 280 to 283 (SKSE), and 309 to 311 (SAV). Mg(2+) contacts are provided by serine 173 and threonine 193.

It belongs to the TRAFAC class OBG-HflX-like GTPase superfamily. OBG GTPase family. In terms of assembly, monomer. It depends on Mg(2+) as a cofactor.

The protein localises to the cytoplasm. An essential GTPase which binds GTP, GDP and possibly (p)ppGpp with moderate affinity, with high nucleotide exchange rates and a fairly low GTP hydrolysis rate. Plays a role in control of the cell cycle, stress response, ribosome biogenesis and in those bacteria that undergo differentiation, in morphogenesis control. The protein is GTPase Obg of Synechococcus sp. (strain RCC307).